The chain runs to 352 residues: DNA polymerase IV (352 aa).

One can recognise a UmuC domain in the interval 6 to 186 (IIHIDMDAFY…LPLGKIPGAG (181 aa)). Positions 10 and 104 each coordinate Mg(2+). Residue Glu-105 is part of the active site.

It belongs to the DNA polymerase type-Y family. As to quaternary structure, monomer. The cofactor is Mg(2+).

It is found in the cytoplasm. The enzyme catalyses DNA(n) + a 2'-deoxyribonucleoside 5'-triphosphate = DNA(n+1) + diphosphate. Its function is as follows. Poorly processive, error-prone DNA polymerase involved in untargeted mutagenesis. Copies undamaged DNA at stalled replication forks, which arise in vivo from mismatched or misaligned primer ends. These misaligned primers can be extended by PolIV. Exhibits no 3'-5' exonuclease (proofreading) activity. May be involved in translesional synthesis, in conjunction with the beta clamp from PolIII. This Neisseria gonorrhoeae (strain ATCC 700825 / FA 1090) protein is DNA polymerase IV.